A 359-amino-acid polypeptide reads, in one-letter code: Molybdenum import ATP-binding protein ModC (359 aa).

One can recognise an ABC transporter domain in the interval 1 to 233 (MSGLTVSIRG…IDAESEGGGV (233 aa)). An ATP-binding site is contributed by 32–39 (GHSGAGKT). The Mop domain occupies 289-355 (AISIRNLLPV…VKAVSVDRAA (67 aa)).

The protein belongs to the ABC transporter superfamily. Molybdate importer (TC 3.A.1.8) family. The complex is composed of two ATP-binding proteins (ModC), two transmembrane proteins (ModB) and a solute-binding protein (ModA).

It is found in the cell inner membrane. It carries out the reaction molybdate(out) + ATP + H2O = molybdate(in) + ADP + phosphate + H(+). In terms of biological role, part of the ABC transporter complex ModABC involved in molybdenum import. Responsible for energy coupling to the transport system. This chain is Molybdenum import ATP-binding protein ModC, found in Brucella suis biovar 1 (strain 1330).